A 215-amino-acid chain; its full sequence is Probable cutinase 3 (215 aa).

An N-terminal signal peptide occupies residues 1 to 17 (MHFRALLVSALATLAMA). Disulfide bonds link Cys-39-Cys-118 and Cys-65-Cys-79. The active-site Nucleophile is the Ser-129. Cys-180 and Cys-187 are disulfide-bonded. Asp-184 is a catalytic residue. The active-site Proton donor/acceptor is His-197.

Belongs to the cutinase family.

Its subcellular location is the secreted. The enzyme catalyses cutin + H2O = cutin monomers.. Functionally, catalyzes the hydrolysis of complex carboxylic polyesters found in the cell wall of plants. Degrades cutin, a macromolecule that forms the structure of the plant cuticle. The protein is Probable cutinase 3 of Aspergillus clavatus (strain ATCC 1007 / CBS 513.65 / DSM 816 / NCTC 3887 / NRRL 1 / QM 1276 / 107).